A 728-amino-acid chain; its full sequence is MAGFWVGTAPLVAAGRRGRWPPQQLMLSAALRTLKHVLYYSRQCLMVSRNLGSVGYDPNEKTFDKILVANRGEIACRVIRTCKKMGIKTVAIHSDVDASSVHVKMADEAVCVGPAPTSKSYLNMDAIMEAIKKTRAQAVHPGYGFLSENKEFARCLAAEDVVFIGPDTHAIQAMGDKIESKLLAKKAEVNTIPGFDGVVKDAEEAVRIAREIGYPVMIKASAGGGGKGMRIAWDDEETRDGFRLSSQEAASSFGDDRLLIEKFIDNPRHIEIQVLGDKHGNALWLNERECSIQRRNQKVVEEAPSIFLDAETRRAMGEQAVALARAVKYSSAGTVEFLVDSKKNFYFLEMNTRLQVEHPVTECITGLDLVQEMIRVAKGYPLRHKQADIRINGWAVECRVYAEDPYKSFGLPSIGRLSQYQEPLHLPGVRVDSGIQPGSDISIYYDPMISKLITYGSDRTEALKRMADALDNYVIRGVTHNIALLREVIINSRFVKGDISTKFLSDVYPDGFKGHMLTKSEKNQLLAIASSLFVAFQLRAQHFQENSRMPVIKPDIANWELSVKLHDKVHTVVASNNGSVFSVEVDGSKLNVTSTWNLASPLLSVSVDGTQRTVQCLSREAGGNMSIQFLGTVYKVNILTRLAAELNKFMLEKVTEDTSSVLRSPMPGVVVAVSVKPGDAVAEGQEICVIEAMKMQNSMTAGKTGTVKSVHCQAGDTVGEGDLLVELE.

The transit peptide at 1 to 52 (MAGFWVGTAPLVAAGRRGRWPPQQLMLSAALRTLKHVLYYSRQCLMVSRNLG) directs the protein to the mitochondrion. The region spanning 62 to 509 (TFDKILVANR…STKFLSDVYP (448 aa)) is the Biotin carboxylation domain. The residue at position 65 (Lys-65) is an N6-acetyllysine; alternate. Lys-65 carries the N6-succinyllysine; alternate modification. Lys-119 is modified (N6-succinyllysine). Lys-150 carries the N6-acetyllysine; alternate modification. Position 150 is an N6-succinyllysine; alternate (Lys-150). Lys-177 provides a ligand contact to ATP. Positions 181–378 (KLLAKKAEVN…LVQEMIRVAK (198 aa)) constitute an ATP-grasp domain. Lys-200 bears the N6-acetyllysine; alternate mark. Lys-200 is modified (N6-succinyllysine; alternate). ATP-binding positions include 209–270 (AREI…PRHI), Glu-261, and Asn-296. Ser-252 is subject to Phosphoserine. Residue Lys-262 is modified to N6-succinyllysine. The residue at position 328 (Lys-328) is an N6-acetyllysine; alternate. Lys-328 carries the post-translational modification N6-succinyllysine; alternate. Glu-336, Glu-349, and Asn-351 together coordinate Mg(2+). The Mn(2+) site is built by Glu-336, Glu-349, and Asn-351. The active site involves Glu-349. N6-succinyllysine is present on residues Lys-385 and Lys-407. Phe-409 is a biotin binding site. The residue at position 496 (Lys-496) is an N6-acetyllysine. N6-succinyllysine occurs at positions 502, 513, and 648. The region spanning 653 to 728 (KVTEDTSSVL…GEGDLLVELE (76 aa)) is the Biotinyl-binding domain. At Lys-694 the chain carries N6-biotinyllysine; by HLCS.

As to quaternary structure, the holoenzyme is a dodecamer composed of 6 PCCA/alpha subunits and 6 PCCB/beta subunits. Interacts (via the biotin carboxylation domain) with SIRT4. Interacts with SIRT3 and SIRT5. Mg(2+) is required as a cofactor. The cofactor is Mn(2+). Requires biotin as cofactor. Post-translationally, acetylated. The biotin cofactor is covalently attached to the C-terminal biotinyl-binding domain and is required for the catalytic activity. Biotinylation is catalyzed by HLCS.

The protein resides in the mitochondrion matrix. The catalysed reaction is propanoyl-CoA + hydrogencarbonate + ATP = (S)-methylmalonyl-CoA + ADP + phosphate + H(+). The enzyme catalyses butanoyl-CoA + hydrogencarbonate + ATP = (2S)-ethylmalonyl-CoA + ADP + phosphate + H(+). It participates in metabolic intermediate metabolism; propanoyl-CoA degradation; succinyl-CoA from propanoyl-CoA: step 1/3. Functionally, this is one of the 2 subunits of the biotin-dependent propionyl-CoA carboxylase (PCC), a mitochondrial enzyme involved in the catabolism of odd chain fatty acids, branched-chain amino acids isoleucine, threonine, methionine, and valine and other metabolites. Propionyl-CoA carboxylase catalyzes the carboxylation of propionyl-CoA/propanoyl-CoA to D-methylmalonyl-CoA/(S)-methylmalonyl-CoA. Within the holoenzyme, the alpha subunit catalyzes the ATP-dependent carboxylation of the biotin carried by the biotin carboxyl carrier (BCC) domain, while the beta subunit then transfers the carboxyl group from carboxylated biotin to propionyl-CoA. Propionyl-CoA carboxylase also significantly acts on butyryl-CoA/butanoyl-CoA, which is converted to ethylmalonyl-CoA/(2S)-ethylmalonyl-CoA at a much lower rate. Other alternative minor substrates include (2E)-butenoyl-CoA/crotonoyl-CoA. The protein is Propionyl-CoA carboxylase alpha chain, mitochondrial of Homo sapiens (Human).